We begin with the raw amino-acid sequence, 219 residues long: Ribose-5-phosphate isomerase A (219 aa).

Substrate is bound by residues 28 to 31 (TGST), 81 to 84 (DGAD), and 94 to 97 (KGGG). Glu-103 (proton acceptor) is an active-site residue. Lys-121 lines the substrate pocket.

This sequence belongs to the ribose 5-phosphate isomerase family. As to quaternary structure, homodimer.

It carries out the reaction aldehydo-D-ribose 5-phosphate = D-ribulose 5-phosphate. The protein operates within carbohydrate degradation; pentose phosphate pathway; D-ribose 5-phosphate from D-ribulose 5-phosphate (non-oxidative stage): step 1/1. Functionally, catalyzes the reversible conversion of ribose-5-phosphate to ribulose 5-phosphate. The protein is Ribose-5-phosphate isomerase A of Acidithiobacillus ferrooxidans (strain ATCC 23270 / DSM 14882 / CIP 104768 / NCIMB 8455) (Ferrobacillus ferrooxidans (strain ATCC 23270)).